We begin with the raw amino-acid sequence, 366 residues long: Chorismate synthase (366 aa).

Positions 48 and 54 each coordinate NADP(+). Residues 125–127 (RSS), 238–239 (NA), glycine 278, 293–297 (KPTSS), and arginine 319 contribute to the FMN site.

The protein belongs to the chorismate synthase family. In terms of assembly, homotetramer. The cofactor is FMNH2.

It catalyses the reaction 5-O-(1-carboxyvinyl)-3-phosphoshikimate = chorismate + phosphate. Its pathway is metabolic intermediate biosynthesis; chorismate biosynthesis; chorismate from D-erythrose 4-phosphate and phosphoenolpyruvate: step 7/7. Catalyzes the anti-1,4-elimination of the C-3 phosphate and the C-6 proR hydrogen from 5-enolpyruvylshikimate-3-phosphate (EPSP) to yield chorismate, which is the branch point compound that serves as the starting substrate for the three terminal pathways of aromatic amino acid biosynthesis. This reaction introduces a second double bond into the aromatic ring system. The protein is Chorismate synthase of Neisseria gonorrhoeae (strain ATCC 700825 / FA 1090).